Here is a 1759-residue protein sequence, read N- to C-terminus: Zinc finger protein castor homolog 1 (1759 aa).

Disordered stretches follow at residues 1–26 (MDLG…PKRK) and 46–175 (KRAD…SSLR). Composition is skewed to basic and acidic residues over residues 77-88 (PRSEEDKRRAVI) and 137-160 (EEPS…KEDS). The span at 161–171 (GPSTRQASGEA) shows a compositional bias: polar residues. Lys-288 participates in a covalent cross-link: Glycyl lysine isopeptide (Lys-Gly) (interchain with G-Cter in SUMO2). A disordered region spans residues 374 to 420 (SKYDVRGIQKPGPAKVPPTPSLAPAPLASVPSAPSAPGPGPEPPASL). Over residues 387 to 396 (AKVPPTPSLA) the composition is skewed to pro residues. Residues 397 to 406 (PAPLASVPSA) show a composition bias toward low complexity. Pro residues predominate over residues 407–417 (PSAPGPGPEPP). C2H2-type zinc fingers lie at residues 551–575 (YHCM…ENFH), 610–634 (FHCR…KSYH), and 668–692 (FHCI…KRKH). 4 disordered regions span residues 686–723 (TSHK…SSND), 736–776 (SSLS…SGLL), 824–843 (VSSG…VASG), and 889–949 (ATFD…AVPA). Basic residues predominate over residues 687-698 (SHKRKHERRHIR). The span at 699–712 (SSGALGLPPSLLGA) shows a compositional bias: low complexity. Residues Ser-720 and Ser-721 each carry the phosphoserine modification. Positions 736–764 (SSLSASPTSQQSSASLAAATAATEAGPSA) are enriched in low complexity. Residues 925 to 939 (ASQDRSLDLTVKEPS) show a composition bias toward basic and acidic residues. A Glycyl lysine isopeptide (Lys-Gly) (interchain with G-Cter in SUMO2) cross-link involves residue Lys-975. Phosphoserine is present on Ser-981. Residues 1031–1055 (FHCVVEECGALFSTLDGAIKHANFH) form a C2H2-type 4 zinc finger. Residues 1067 to 1111 (TEAAFPASAAETKPPMAPSSPPVPPVTTATVSSLEGPAPSPASVP) are disordered. Over residues 1081–1091 (PMAPSSPPVPP) the composition is skewed to pro residues. Residues 1300–1324 (FHCIREGCQFSFLLKHQMTSHARKH) form a C2H2-type 5 zinc finger. A disordered region spans residues 1367-1392 (ESSTMDRSCSSTPVGNESTAAGNTIS). C2H2-type zinc fingers lie at residues 1457–1481 (YHCT…AQHH), 1515–1537 (FHCL…RKHH), and 1571–1595 (FHCT…KRKH). 2 disordered regions span residues 1589 to 1620 (DSHK…DGSL) and 1643 to 1736 (LGDA…AGAR). The span at 1655–1673 (AAPGPREGAAAAAAAAGES) shows a compositional bias: low complexity. The segment covering 1674-1723 (SQEDEEEELELPEEEAEDDEDEDDDEDDDDEDDDEDDDDEDLRTDSEESL) has biased composition (acidic residues). The span at 1724 to 1736 (PEAAAEAAGAGAR) shows a compositional bias: low complexity.

As to expression, expressed in heart, lung, skeletal muscle, pancreas, testis, small intestine, and stomach, but it is not detectable in the adult brain.

It localises to the nucleus. Its function is as follows. Transcriptional activator. Involved in vascular assembly and morphogenesis through direct transcriptional regulation of EGFL7. This Homo sapiens (Human) protein is Zinc finger protein castor homolog 1 (CASZ1).